We begin with the raw amino-acid sequence, 443 residues long: ATP-dependent protease ATPase subunit HslU (443 aa).

ATP is bound by residues Ile18, Gly60 to Glu65, Asp256, Glu321, and Arg393.

It belongs to the ClpX chaperone family. HslU subfamily. As to quaternary structure, a double ring-shaped homohexamer of HslV is capped on each side by a ring-shaped HslU homohexamer. The assembly of the HslU/HslV complex is dependent on binding of ATP.

Its subcellular location is the cytoplasm. Functionally, ATPase subunit of a proteasome-like degradation complex; this subunit has chaperone activity. The binding of ATP and its subsequent hydrolysis by HslU are essential for unfolding of protein substrates subsequently hydrolyzed by HslV. HslU recognizes the N-terminal part of its protein substrates and unfolds these before they are guided to HslV for hydrolysis. This chain is ATP-dependent protease ATPase subunit HslU, found in Vibrio cholerae serotype O1 (strain ATCC 39315 / El Tor Inaba N16961).